A 171-amino-acid polypeptide reads, in one-letter code: Envelope glycoprotein N (171 aa).

At 1 to 132 (MARINSNSGT…CSALKYRIYV (132 aa)) the chain is on the virion surface side. The chain crosses the membrane as a helical span at residues 133-153 (SSFVSVLNIILYVLLFLASVV). Residues 154-171 (YIRYLCHQSITTETVKDY) lie on the Intravirion side of the membrane.

The protein belongs to the herpesviridae glycoprotein N family. As to quaternary structure, interacts (via N-terminus) with gM (via N-terminus). The gM-gN heterodimer forms the gCII complex.

It localises to the virion membrane. The protein resides in the host membrane. It is found in the host Golgi apparatus. The protein localises to the host trans-Golgi network. Its function is as follows. Envelope glycoprotein necessary for proper maturation of gM and modulation of its membrane fusion activity. Also plays a critical role in virion morphogenesis. This is Envelope glycoprotein N from Elephas maximus (Indian elephant).